Here is a 144-residue protein sequence, read N- to C-terminus: Large ribosomal subunit protein uL15 (144 aa).

The segment at 1–57 (MKLNDLSPAPGSRREKHRPGRGIGSGLGKTGGRGHKGQTSRSGGTIAPGFEGGQQPL) is disordered. Positions 21-31 (RGIGSGLGKTG) are enriched in gly residues.

Belongs to the universal ribosomal protein uL15 family. In terms of assembly, part of the 50S ribosomal subunit.

Its function is as follows. Binds to the 23S rRNA. This is Large ribosomal subunit protein uL15 from Pseudomonas fluorescens (strain ATCC BAA-477 / NRRL B-23932 / Pf-5).